A 290-amino-acid chain; its full sequence is ATP synthase gamma chain (290 aa).

It belongs to the ATPase gamma chain family. In terms of assembly, F-type ATPases have 2 components, CF(1) - the catalytic core - and CF(0) - the membrane proton channel. CF(1) has five subunits: alpha(3), beta(3), gamma(1), delta(1), epsilon(1). CF(0) has three main subunits: a, b and c.

It localises to the cell membrane. Its function is as follows. Produces ATP from ADP in the presence of a proton gradient across the membrane. The gamma chain is believed to be important in regulating ATPase activity and the flow of protons through the CF(0) complex. The chain is ATP synthase gamma chain from Roseiflexus castenholzii (strain DSM 13941 / HLO8).